Consider the following 259-residue polypeptide: UBX domain-containing protein 2A (259 aa).

A required for interaction with CHRNA3 region spans residues 1–151 (MKDVDNLKSI…SATPKIVSKA (151 aa)). Positions 1 to 164 (MKDVDNLKSI…EVENKNNLSA (164 aa)) are required for inhibition of CHRNA3 ubiquitination and translocation of CHRNA3 to the plasma membrane resulting in an increase in acetylcholine-gated nicotinic acetylcholine receptor currents. An SEP domain is found at 60–124 (QVDVNIKLWK…VEDKKNEICL (65 aa)). A required for interaction with VCP region spans residues 167-259 (LNNLEPITNI…TASFRELSEH (93 aa)). Positions 169–246 (NLEPITNIQI…DLQNAVIIQR (78 aa)) constitute a UBX domain.

In terms of assembly, part of a complex composed of STUB1/CHIP, VCP/p97, CHRNA3, and UBXN2A that modulates the ubiquitination and endoplasmic reticulum-associated degradation (ERAD) of CHRNA3. Within the complex UBXN2A acts as a scaffold protein required for the interaction of CHRNA3 with VCP/p97, this interaction also inhibits CHRNA3 ubiquitination by STUB1/CHIP and subsequently ERAD. Interacts (via SEP domain) with CHRNA3 and interacts (via UBX domain) with VCP/P97; these interactions are required for the interaction of CHRNA3 with the STUB1-VCP-UBXN2A complex. Interacts with HSPA9/MOT-2 (via SBD domain); the interaction inhibits HSPA9/MOT-2 interaction with and degradation of p53, thereby promotes p53 translocation to the nucleus. Interacts with RICTOR. Ubiquitinated. Expressed in the colon (at protein level).

The protein resides in the golgi apparatus. It is found in the endoplasmic reticulum. Its subcellular location is the perikaryon. The protein localises to the cell projection. It localises to the dendrite. The protein resides in the nucleus. It is found in the cytoplasm. Functionally, acts to repress the ubiquitination and subsequent endoplasmic reticulum-associated degradation of CHRNA3 by the STUB1-VCP-UBXN2A complex in cortical neurons. Also acts to promote the translocation of CHRNA3 to the plasma membrane and subsequently increases plasma membrane acetylcholine-gated ion-channel activation. Plays a role in the inhibition of STUB1-mediated TP53 degradation, via its interaction with HSPA9 which acts to inhibit TP53 binding to HSPA9. Positively mediates the ubiquitination and proteosomal degradation of RICTOR, may thereby act as a negative regulator of the mTORC2 pathway. In Homo sapiens (Human), this protein is UBX domain-containing protein 2A.